A 185-amino-acid polypeptide reads, in one-letter code: Imidazoleglycerol-phosphate dehydratase (185 aa).

The protein belongs to the imidazoleglycerol-phosphate dehydratase family.

It localises to the cytoplasm. It catalyses the reaction D-erythro-1-(imidazol-4-yl)glycerol 3-phosphate = 3-(imidazol-4-yl)-2-oxopropyl phosphate + H2O. It functions in the pathway amino-acid biosynthesis; L-histidine biosynthesis; L-histidine from 5-phospho-alpha-D-ribose 1-diphosphate: step 6/9. This Pyrobaculum arsenaticum (strain DSM 13514 / JCM 11321 / PZ6) protein is Imidazoleglycerol-phosphate dehydratase.